Reading from the N-terminus, the 763-residue chain is Exo-1,4-beta-xylosidase bxlB (763 aa).

Residues 1–23 (MAVFKSWNLALLSSLFIPALCQS) form the signal peptide. A glycan (N-linked (GlcNAc...) asparagine) is linked at asparagine 63. The active site involves aspartate 288. N-linked (GlcNAc...) asparagine glycans are attached at residues asparagine 340, asparagine 408, asparagine 419, asparagine 458, asparagine 621, and asparagine 760.

Belongs to the glycosyl hydrolase 3 family.

The protein resides in the secreted. It catalyses the reaction Hydrolysis of (1-&gt;4)-beta-D-xylans, to remove successive D-xylose residues from the non-reducing termini.. The protein operates within glycan degradation; xylan degradation. Its function is as follows. Xylan 1,4-beta-xylosidase involved in the hydrolysis of xylan, a major structural heterogeneous polysaccharide found in plant biomass representing the second most abundant polysaccharide in the biosphere, after cellulose. Active against rye arabinoxylan and xylohexaose, but not paranitrophenyl-beta-xyloside. The sequence is that of Exo-1,4-beta-xylosidase bxlB (bxlB) from Emericella nidulans (strain FGSC A4 / ATCC 38163 / CBS 112.46 / NRRL 194 / M139) (Aspergillus nidulans).